The sequence spans 583 residues: Propane 2-monooxygenase operon transcriptional activator MimR (583 aa).

Residues 320–513 form the Sigma-54 factor interaction domain; sequence LAGRSSSFRR…LRHVLTETLR (194 aa). ATP is bound by residues 348 to 355 and 395 to 404; these read GEKGSGRT and DADFAVIVAD.

In terms of biological role, acts as a transcriptional activator of the mimABCD operon encoding the propane 2-monooxygenase complex. This is Propane 2-monooxygenase operon transcriptional activator MimR from Mycolicibacterium goodii (Mycobacterium goodii).